Consider the following 250-residue polypeptide: 5-oxoprolinase subunit A (250 aa).

The protein belongs to the LamB/PxpA family. As to quaternary structure, forms a complex composed of PxpA, PxpB and PxpC.

It carries out the reaction 5-oxo-L-proline + ATP + 2 H2O = L-glutamate + ADP + phosphate + H(+). Its function is as follows. Catalyzes the cleavage of 5-oxoproline to form L-glutamate coupled to the hydrolysis of ATP to ADP and inorganic phosphate. In Streptomyces griseus subsp. griseus (strain JCM 4626 / CBS 651.72 / NBRC 13350 / KCC S-0626 / ISP 5235), this protein is 5-oxoprolinase subunit A.